The following is a 235-amino-acid chain: 7-carboxy-7-deazaguanine synthase (235 aa).

Residues 25-27 (IQG) and Arg40 contribute to the substrate site. The Radical SAM core domain occupies 31-235 (FTGTYSVFVR…PRLHLLVQLP (205 aa)). [4Fe-4S] cluster-binding residues include Cys44, Cys48, and Cys51. Thr53 is a Mg(2+) binding site. Thr85 contacts substrate. S-adenosyl-L-methionine is bound by residues Gly87 and 135–137 (SPK). Position 235 (Pro235) interacts with substrate.

Belongs to the radical SAM superfamily. 7-carboxy-7-deazaguanine synthase family. As to quaternary structure, homodimer. The cofactor is [4Fe-4S] cluster. Requires S-adenosyl-L-methionine as cofactor. Mg(2+) is required as a cofactor.

The enzyme catalyses 6-carboxy-5,6,7,8-tetrahydropterin + H(+) = 7-carboxy-7-deazaguanine + NH4(+). Its pathway is purine metabolism; 7-cyano-7-deazaguanine biosynthesis. Catalyzes the complex heterocyclic radical-mediated conversion of 6-carboxy-5,6,7,8-tetrahydropterin (CPH4) to 7-carboxy-7-deazaguanine (CDG), a step common to the biosynthetic pathways of all 7-deazapurine-containing compounds. The sequence is that of 7-carboxy-7-deazaguanine synthase from Hyperthermus butylicus (strain DSM 5456 / JCM 9403 / PLM1-5).